Reading from the N-terminus, the 879-residue chain is DNA mismatch repair protein MutS (879 aa).

629–636 provides a ligand contact to ATP; it reads GPNMAGKS.

The protein belongs to the DNA mismatch repair MutS family.

Its function is as follows. This protein is involved in the repair of mismatches in DNA. It is possible that it carries out the mismatch recognition step. This protein has a weak ATPase activity. The polypeptide is DNA mismatch repair protein MutS (Ruegeria sp. (strain TM1040) (Silicibacter sp.)).